Here is a 230-residue protein sequence, read N- to C-terminus: Ribosomal RNA large subunit methyltransferase E (230 aa).

Positions 1–13 are enriched in gly residues; it reads MSGSGGKGGGRGG. Residues 1–22 form a disordered region; that stretch reads MSGSGGKGGGRGGLHVRVKTAK. Positions 81, 83, 100, 116, and 140 each coordinate S-adenosyl-L-methionine. Lysine 180 functions as the Proton acceptor in the catalytic mechanism.

Belongs to the class I-like SAM-binding methyltransferase superfamily. RNA methyltransferase RlmE family.

It is found in the cytoplasm. It carries out the reaction uridine(2552) in 23S rRNA + S-adenosyl-L-methionine = 2'-O-methyluridine(2552) in 23S rRNA + S-adenosyl-L-homocysteine + H(+). Functionally, specifically methylates the uridine in position 2552 of 23S rRNA at the 2'-O position of the ribose in the fully assembled 50S ribosomal subunit. The protein is Ribosomal RNA large subunit methyltransferase E of Sphingopyxis alaskensis (strain DSM 13593 / LMG 18877 / RB2256) (Sphingomonas alaskensis).